The following is a 298-amino-acid chain: MSSPDNSSPSLRIPPWLRVKLPCSHTFADTRALVEGLGLNTVCNSAKCPNMFECFSSGTATFLILGNVCTRNCAFCNITPGHVSPPDPDEPRRVAEAAARLALRHVVVTSVTRDDLDDGGAAHFAATITRLRAALPAATVEVLIPDFRGDHAALRTVMAAAPHIVNHNVETPPAHYARIRPQADYRQSLELLRRVKAAGGVAKSGLMVGLGENDTEVEGVLADLADCGCDIVTIGQYMRPSRQHPPVERYVHPDTFESFAACGRGMGIPFVFSAPLVRSSYNAESAYNALCTLRTEPA.

The [4Fe-4S] cluster site is built by C43, C48, C54, C69, C73, C76, and S280. Residues F55–P269 form the Radical SAM core domain.

It belongs to the radical SAM superfamily. Lipoyl synthase family. [4Fe-4S] cluster serves as cofactor.

The protein localises to the cytoplasm. It catalyses the reaction [[Fe-S] cluster scaffold protein carrying a second [4Fe-4S](2+) cluster] + N(6)-octanoyl-L-lysyl-[protein] + 2 oxidized [2Fe-2S]-[ferredoxin] + 2 S-adenosyl-L-methionine + 4 H(+) = [[Fe-S] cluster scaffold protein] + N(6)-[(R)-dihydrolipoyl]-L-lysyl-[protein] + 4 Fe(3+) + 2 hydrogen sulfide + 2 5'-deoxyadenosine + 2 L-methionine + 2 reduced [2Fe-2S]-[ferredoxin]. The protein operates within protein modification; protein lipoylation via endogenous pathway; protein N(6)-(lipoyl)lysine from octanoyl-[acyl-carrier-protein]: step 2/2. Functionally, catalyzes the radical-mediated insertion of two sulfur atoms into the C-6 and C-8 positions of the octanoyl moiety bound to the lipoyl domains of lipoate-dependent enzymes, thereby converting the octanoylated domains into lipoylated derivatives. In Nitratidesulfovibrio vulgaris (strain ATCC 29579 / DSM 644 / CCUG 34227 / NCIMB 8303 / VKM B-1760 / Hildenborough) (Desulfovibrio vulgaris), this protein is Lipoyl synthase.